Consider the following 202-residue polypeptide: ATP-dependent Clp protease proteolytic subunit (202 aa).

Serine 106 acts as the Nucleophile in catalysis. Histidine 131 is a catalytic residue.

It belongs to the peptidase S14 family. As to quaternary structure, fourteen ClpP subunits assemble into 2 heptameric rings which stack back to back to give a disk-like structure with a central cavity, resembling the structure of eukaryotic proteasomes.

It is found in the cytoplasm. It catalyses the reaction Hydrolysis of proteins to small peptides in the presence of ATP and magnesium. alpha-casein is the usual test substrate. In the absence of ATP, only oligopeptides shorter than five residues are hydrolyzed (such as succinyl-Leu-Tyr-|-NHMec, and Leu-Tyr-Leu-|-Tyr-Trp, in which cleavage of the -Tyr-|-Leu- and -Tyr-|-Trp bonds also occurs).. Functionally, cleaves peptides in various proteins in a process that requires ATP hydrolysis. Has a chymotrypsin-like activity. Plays a major role in the degradation of misfolded proteins. The chain is ATP-dependent Clp protease proteolytic subunit from Shewanella baltica (strain OS223).